Consider the following 390-residue polypeptide: 1-deoxy-D-xylulose 5-phosphate reductoisomerase (390 aa).

Residues Thr18, Gly19, Ser20, Ile21, and Asn130 each contribute to the NADPH site. Residue Lys131 participates in 1-deoxy-D-xylulose 5-phosphate binding. Glu132 is an NADPH binding site. Asp156 lines the Mn(2+) pocket. Positions 157, 158, 182, and 205 each coordinate 1-deoxy-D-xylulose 5-phosphate. Glu158 contacts Mn(2+). Gly211 contacts NADPH. 4 residues coordinate 1-deoxy-D-xylulose 5-phosphate: Ser218, Asn223, Lys224, and Glu227. Glu227 contributes to the Mn(2+) binding site.

This sequence belongs to the DXR family. It depends on Mg(2+) as a cofactor. The cofactor is Mn(2+).

The enzyme catalyses 2-C-methyl-D-erythritol 4-phosphate + NADP(+) = 1-deoxy-D-xylulose 5-phosphate + NADPH + H(+). It participates in isoprenoid biosynthesis; isopentenyl diphosphate biosynthesis via DXP pathway; isopentenyl diphosphate from 1-deoxy-D-xylulose 5-phosphate: step 1/6. Its function is as follows. Catalyzes the NADPH-dependent rearrangement and reduction of 1-deoxy-D-xylulose-5-phosphate (DXP) to 2-C-methyl-D-erythritol 4-phosphate (MEP). The protein is 1-deoxy-D-xylulose 5-phosphate reductoisomerase of Bacteroides thetaiotaomicron (strain ATCC 29148 / DSM 2079 / JCM 5827 / CCUG 10774 / NCTC 10582 / VPI-5482 / E50).